The chain runs to 1265 residues: Methionine synthase (1265 aa).

The Hcy-binding domain maps to Gln-19–Val-338. Residues Cys-260, Cys-323, and Cys-324 each contribute to the Zn(2+) site. In terms of domain architecture, Pterin-binding spans Phe-371 to Glu-632. (6S)-5,6,7,8-tetrahydrofolate contacts are provided by residues Gly-382 to Arg-384, Asp-449, Asn-470, Asp-537, Asn-579, Arg-585, and Arg-591. One can recognise a B12-binding N-terminal domain in the interval Gln-662–Lys-759. Methylcob(III)alamin contacts are provided by residues Glu-709, Gly-782–Asp-786, His-785, Ser-830, Thr-834, and Ala-886. The 136-residue stretch at Gln-772–Glu-907 folds into the B12-binding domain. One can recognise an AdoMet activation domain in the interval Ser-923–Asp-1265. S-adenosyl-L-methionine-binding positions include Asp-974, Arg-1172, and Tyr-1227 to Phe-1228. Phosphothreonine is present on Thr-1264.

The protein belongs to the vitamin-B12 dependent methionine synthase family. In terms of assembly, monomer. Dimer. Forms a multiprotein complex with MMACHC, MMADHC and MTRR. Requires methylcob(III)alamin as cofactor. The cofactor is Zn(2+).

Its subcellular location is the cytoplasm. It carries out the reaction (6S)-5-methyl-5,6,7,8-tetrahydrofolate + L-homocysteine = (6S)-5,6,7,8-tetrahydrofolate + L-methionine. Its pathway is amino-acid biosynthesis; L-methionine biosynthesis via de novo pathway; L-methionine from L-homocysteine (MetH route): step 1/1. Functionally, catalyzes the transfer of a methyl group from methylcob(III)alamin (MeCbl) to homocysteine, yielding enzyme-bound cob(I)alamin and methionine in the cytosol. MeCbl is an active form of cobalamin (vitamin B12) used as a cofactor for methionine biosynthesis. Cob(I)alamin form is regenerated to MeCbl by a transfer of a methyl group from 5-methyltetrahydrofolate. The processing of cobalamin in the cytosol occurs in a multiprotein complex composed of at least MMACHC, MMADHC, MTRR (methionine synthase reductase) and MTR which may contribute to shuttle safely and efficiently cobalamin towards MTR in order to produce methionine. In Bos taurus (Bovine), this protein is Methionine synthase (MTR).